The sequence spans 337 residues: MDSHIHNDTDDWFNDLDQKSIQVISNKLIPEESNSSDEEISLENINSRSNFIDDNDKIEHIFIEDILKKDVVNLSSNELLQYQCSVAYFIQVLFEGLNDSNELIANKSNFNIKTTSDKMNSMVEYLEWISGVSEILAKRIGQQIYQFIPDRNNTITRSSYNFCPASTQCKKFYSKNENPTCKSHHFVHSLLKYDVDSVIYYLKHNNKNGSFNTDELNNLHLSIKTICFVTRHMAREISYIENITKNNSEQFHRNNPADLTKKKSTNVSGKKSWDSVSTIRTHKATKTFPQNKTRQCSNTKTTTKSTMTPINNGFKESPNQILKIKNGVNRYSILSEY.

The disordered stretch occupies residues 291–314 (NKTRQCSNTKTTTKSTMTPINNGF). Low complexity predominate over residues 299–308 (TKTTTKSTMT).

This is an uncharacterized protein from Acanthamoeba polyphaga mimivirus (APMV).